The chain runs to 200 residues: Recombination protein RecR (200 aa).

The segment at 58–75 (CPCCFCLKNFPESQCEFC) adopts a C4-type zinc-finger fold. One can recognise a Toprim domain in the interval 82-177 (STLCIVASPK…SISRLALGLP (96 aa)).

It belongs to the RecR family.

Functionally, may play a role in DNA repair. It seems to be involved in an RecBC-independent recombinational process of DNA repair. It may act with RecF and RecO. The protein is Recombination protein RecR of Chlamydia felis (strain Fe/C-56) (Chlamydophila felis).